Consider the following 467-residue polypeptide: Ethanolamine ammonia-lyase reactivase EutA (467 aa).

The protein belongs to the EutA family.

Its subcellular location is the bacterial microcompartment. It functions in the pathway amine and polyamine degradation; ethanolamine degradation. Reactivates suicidally inhibited ethanolamine ammonia-lyase (EAL), cyanocobalamin-inactivated EAL and O(2)-inactivated EAL; requires Mg(2+), ATP and adenosylcobalamin. Reactivation probably occurs by the ATP-dependent exchange of cobalamin. Protects EAL from inhibition by CN-B12, does not have adenosylation activity. Its function is as follows. Expression of the eut operon allows this bacteria to use ethanolamine as a carbon, nitrogen and energy source. It relies on cobalamin (vitamin B12) both as a cofactor for the ethanolamine ammonia-lyase (EAL) activity and to induce the operon. EA enhances bacterial survival in macrophages in a concentration-dependent manner, suggesting it is an important nutrient during infection. The polypeptide is Ethanolamine ammonia-lyase reactivase EutA (Salmonella typhimurium (strain LT2 / SGSC1412 / ATCC 700720)).